The following is a 431-amino-acid chain: Shaggy-related protein kinase beta (431 aa).

Residues 12–24 (SGRNFVSSDNVGE) are compositionally biased toward polar residues. Residues 12–65 (SGRNFVSSDNVGETETPRSKPNQNREETESTETTSYEKDSVSSSENSDHLPKEI) are disordered. 2 stretches are compositionally biased toward basic and acidic residues: residues 26–39 (ETPR…REET) and 46–65 (SYEK…PKEI). A Protein kinase domain is found at 102–386 (YRAEHVIGTG…ALEACAHPFF (285 aa)). ATP is bound by residues 108 to 116 (IGTGSFGVV) and Lys-131. The active-site Proton acceptor is Asp-227. Tyr-262 carries the post-translational modification Phosphotyrosine.

This sequence belongs to the protein kinase superfamily. CMGC Ser/Thr protein kinase family. GSK-3 subfamily. Autophosphorylated mainly on threonine and serine residues.

It carries out the reaction L-seryl-[protein] + ATP = O-phospho-L-seryl-[protein] + ADP + H(+). It catalyses the reaction L-threonyl-[protein] + ATP = O-phospho-L-threonyl-[protein] + ADP + H(+). In terms of biological role, may mediate extracellular signals to regulate transcription in differentiating cells. This Arabidopsis thaliana (Mouse-ear cress) protein is Shaggy-related protein kinase beta.